The sequence spans 88 residues: Small ribosomal subunit protein uS15 (88 aa).

This sequence belongs to the universal ribosomal protein uS15 family. In terms of assembly, part of the 30S ribosomal subunit. Forms a bridge to the 50S subunit in the 70S ribosome, contacting the 23S rRNA.

In terms of biological role, one of the primary rRNA binding proteins, it binds directly to 16S rRNA where it helps nucleate assembly of the platform of the 30S subunit by binding and bridging several RNA helices of the 16S rRNA. Its function is as follows. Forms an intersubunit bridge (bridge B4) with the 23S rRNA of the 50S subunit in the ribosome. In Methylacidiphilum infernorum (isolate V4) (Methylokorus infernorum (strain V4)), this protein is Small ribosomal subunit protein uS15.